We begin with the raw amino-acid sequence, 222 residues long: Charged multivesicular body protein 3 (222 aa).

G2 carries N-myristoyl glycine lipidation. Residues 2–113 (GLFGKTQEKP…LQKSTEVMKA (112 aa)) form an intramolecular interaction with C-terminus region. The stretch at 22 to 54 (KIRKEMRVVDRQIRDIQREEEKVKRSVKDAAKK) forms a coiled coil. Important for autoinhibitory function stretches follow at residues 59–64 (VCVVLA) and 168–169 (IL). Residues 149 to 222 (ESMDDQEEME…MQSRLATLRS (74 aa)) are a coiled coil. Positions 151 to 220 (MDDQEEMEEA…EAMQSRLATL (70 aa)) are intramolecular interaction with N-terminus. Residues 151 to 222 (MDDQEEMEEA…MQSRLATLRS (72 aa)) are interaction with VPS4A. K179 participates in a covalent cross-link: Glycyl lysine isopeptide (Lys-Gly) (interchain with G-Cter in ubiquitin). Residues 180–222 (APSKVTDALPEPEPLGAMAASEDEEEEEEALEAMQSRLATLRS) form a disordered region. Interaction with STAMBP regions lie at residues 196–222 (AMAASEDEEEEEEALEAMQSRLATLRS), 203–207 (EEEEE), and 221–222 (RS). S200 carries the post-translational modification Phosphoserine. Over residues 200 to 210 (SEDEEEEEEAL) the composition is skewed to acidic residues. The short motif at 201–211 (EDEEEEEEALE) is the MIT-interacting motif element.

The protein belongs to the SNF7 family. As to quaternary structure, probable core component of the endosomal sorting required for transport complex III (ESCRT-III). ESCRT-III components are thought to multimerize to form a flat lattice on the perimeter membrane of the endosome. Several assembly forms of ESCRT-III may exist that interact and act sequentially. Forms a metastable monomer in solution; its core structure (without part of the putative autoinhibitory C-terminal acidic region) oligomerizes into a flat lattice via two different dimerization interfaces. In vitro, heteromerizes with CHMP2A (but not CHMP4) to form helical tubular structures that expose membrane-interacting sites on the outside whereas VPS4B can associate on the inside of the tubule. May interact with IGFBP7; the relevance of such interaction however remains unclear. Interacts with CHMP2A. Interacts with CHMP4A; the interaction requires the release of CHMP4A autoinhibition. Interacts with VPS4A. Interacts with STAMBP; the interaction appears to relieve the autoinhibition of CHMP3. Interacts with VTA1.

The protein localises to the cytoplasm. Its subcellular location is the cytosol. It is found in the membrane. It localises to the endosome. The protein resides in the late endosome membrane. Functionally, probable core component of the endosomal sorting required for transport complex III (ESCRT-III) which is involved in multivesicular bodies (MVBs) formation and sorting of endosomal cargo proteins into MVBs. MVBs contain intraluminal vesicles (ILVs) that are generated by invagination and scission from the limiting membrane of the endosome and mostly are delivered to lysosomes enabling degradation of membrane proteins, such as stimulated growth factor receptors, lysosomal enzymes and lipids. The MVB pathway appears to require the sequential function of ESCRT-O, -I,-II and -III complexes. ESCRT-III proteins mostly dissociate from the invaginating membrane before the ILV is released. The ESCRT machinery also functions in topologically equivalent membrane fission events, such as the terminal stages of cytokinesis and the budding of enveloped viruses (lentiviruses). ESCRT-III proteins are believed to mediate the necessary vesicle extrusion and/or membrane fission activities, possibly in conjunction with the AAA ATPase VPS4. Selectively binds to phosphatidylinositol 3,5-bisphosphate PtdIns(3,5)P2 and PtdIns(3,4)P2 in preference to other phosphoinositides tested. Involved in late stages of cytokinesis. Plays a role in endosomal sorting/trafficking of EGF receptor. The protein is Charged multivesicular body protein 3 (CHMP3) of Bos taurus (Bovine).